The chain runs to 376 residues: Dihydroorotate dehydrogenase (quinone) (376 aa).

Residues 74–78 and threonine 98 each bind FMN; that span reads AGFDK. Lysine 78 serves as a coordination point for substrate. 123-127 lines the substrate pocket; that stretch reads NHMGF. 2 residues coordinate FMN: asparagine 152 and asparagine 185. A substrate-binding site is contributed by asparagine 185. Residue serine 188 is the Nucleophile of the active site. Asparagine 190 serves as a coordination point for substrate. FMN is bound by residues lysine 223 and threonine 251. Residue 252 to 253 coordinates substrate; sequence NT. FMN-binding positions include glycine 280, glycine 309, and 330–331; that span reads YT. The interval 352–376 is disordered; that stretch reads RNPAPSSPERMPTGIQSGRKIVMDP.

The protein belongs to the dihydroorotate dehydrogenase family. Type 2 subfamily. As to quaternary structure, monomer. Requires FMN as cofactor.

Its subcellular location is the cell membrane. It catalyses the reaction (S)-dihydroorotate + a quinone = orotate + a quinol. It functions in the pathway pyrimidine metabolism; UMP biosynthesis via de novo pathway; orotate from (S)-dihydroorotate (quinone route): step 1/1. Catalyzes the conversion of dihydroorotate to orotate with quinone as electron acceptor. This is Dihydroorotate dehydrogenase (quinone) from Synechococcus sp. (strain JA-3-3Ab) (Cyanobacteria bacterium Yellowstone A-Prime).